The sequence spans 260 residues: (R)-2-hydroxyglutaryl-CoA dehydratase activating ATPase (260 aa).

12-16 (STASK) contributes to the ATP binding site. Residues Cys-127 and Cys-166 each coordinate [4Fe-4S] cluster. The ATP site is built by Gln-220 and Gln-243.

Belongs to the HgdC family. Homodimer. [4Fe-4S] cluster serves as cofactor. It depends on Mg(2+) as a cofactor.

The enzyme catalyses ATP + H2O = ADP + phosphate + H(+). Its pathway is amino-acid degradation; L-glutamate degradation via hydroxyglutarate pathway; crotonoyl-CoA from L-glutamate: step 4/5. Inactivated by exposure to air within less than 15 minutes. In terms of biological role, involved in the fermentation of L-glutamate via the hydroxyglutarate pathway. HgdC (CompA) has a very low ATPase activity, whose the role is to activate dehydratase HgdA-HgdB complex and then maintain an appropriate redox state via an ATP-dependent electron transfer. The dehydratase requires only catalytic amounts of ATP and substoichiometric amounts of HgdC (CompA) to be functional. The protein is (R)-2-hydroxyglutaryl-CoA dehydratase activating ATPase of Acidaminococcus fermentans (strain ATCC 25085 / DSM 20731 / CCUG 9996 / CIP 106432 / VR4).